A 332-amino-acid chain; its full sequence is Ubiquinone biosynthesis protein COQ4, mitochondrial (332 aa).

The N-terminal 16 residues, 1–16 (MFTVSKKSLQASRNAF), are a transit peptide targeting the mitochondrion. The Zn(2+) site is built by histidine 212, aspartate 213, histidine 216, and glutamate 228.

The protein belongs to the COQ4 family. Component of a multi-subunit COQ enzyme complex, composed of at least COQ3, COQ4, COQ5, COQ6, COQ7 and COQ9. Zn(2+) is required as a cofactor.

It is found in the mitochondrion inner membrane. It carries out the reaction a 4-hydroxy-3-methoxy-5-(all-trans-polyprenyl)benzoate + H(+) = a 2-methoxy-6-(all-trans-polyprenyl)phenol + CO2. The protein operates within cofactor biosynthesis; ubiquinone biosynthesis. Functionally, lyase that catalyzes the C1-decarboxylation of 4-hydroxy-3-methoxy-5-(all-trans-polyprenyl)benzoic acid into 2-methoxy-6-(all-trans-polyprenyl)phenol during ubiquinone biosynthesis. The polypeptide is Ubiquinone biosynthesis protein COQ4, mitochondrial (Kluyveromyces lactis (strain ATCC 8585 / CBS 2359 / DSM 70799 / NBRC 1267 / NRRL Y-1140 / WM37) (Yeast)).